Here is a 292-residue protein sequence, read N- to C-terminus: NAC domain-containing protein 96 (292 aa).

In terms of domain architecture, NAC spans 6–158; that stretch reads LPPGFRFHPT…AFVLCRVAMK (153 aa). Residues 106–164 mediate DNA binding; sequence IGYRKTLVFYKGRAPLGDRSNWIMHEYRLCDDDTSQGSQNLKGAFVLCRVAMKNEIKTN. Residues 171 to 199 form a disordered region; that stretch reads PSEQTIGSGESSGLSSRVTSPSRDETMPF. Positions 172-191 are enriched in polar residues; it reads SEQTIGSGESSGLSSRVTSP.

As to quaternary structure, interacts with ABF2 and ABF4. As to expression, expressed in roots, rosettes leaves, cauline leaves and stems.

Its subcellular location is the nucleus. Transcriptional activator involved in the positive regulation of abscisic acid (ABA) responsive genes. Acts as a positive factor of ABA-mediated responses. Involved in the transcriptional activation of ABA-inducible genes in response to dehydration and osmotic stresses. Plays a positive role in both stomatal closure and water loss under dehydration stress conditions. Acts synergistically with ABF2 to activate the dehydration stress-response factor RD29A transcription. Binds to the consensus core cis-acting elements 5'-CGTA-3' and 5'-CACG-3' at the RD29A promoter. Involved in hypocotyl graft union formation. Required for the auxin-mediated promotion of vascular tissue proliferation during hypocotyl graft attachment. The chain is NAC domain-containing protein 96 from Arabidopsis thaliana (Mouse-ear cress).